Reading from the N-terminus, the 202-residue chain is LexA repressor (202 aa).

The H-T-H motif DNA-binding region spans 28–48; that stretch reads RAEIASRLGFRSPNAAEEHLK. Active-site for autocatalytic cleavage activity residues include Ser119 and Lys156.

The protein belongs to the peptidase S24 family. Homodimer.

The catalysed reaction is Hydrolysis of Ala-|-Gly bond in repressor LexA.. Represses a number of genes involved in the response to DNA damage (SOS response), including recA and lexA. Binds to the 16 bp palindromic sequence 5'-CTGTATATATATACAG-3'. In the presence of single-stranded DNA, RecA interacts with LexA causing an autocatalytic cleavage which disrupts the DNA-binding part of LexA, leading to derepression of the SOS regulon and eventually DNA repair. This Sodalis glossinidius (strain morsitans) protein is LexA repressor.